Reading from the N-terminus, the 538-residue chain is Putative cysteine ligase BshC (538 aa).

Residues 248-268 are a coiled coil; the sequence is ISKYKEVQEGLRNQQEVIKEL.

This sequence belongs to the BshC family.

In terms of biological role, involved in bacillithiol (BSH) biosynthesis. May catalyze the last step of the pathway, the addition of cysteine to glucosamine malate (GlcN-Mal) to generate BSH. This chain is Putative cysteine ligase BshC, found in Bacillus cereus (strain G9842).